The primary structure comprises 531 residues: Protein SHORT-ROOT (531 aa).

Positions 14–39 (QQSDSIITNQSSLSRTSTTTTGSPQT) are enriched in low complexity. Disordered stretches follow at residues 14–40 (QQSDSIITNQSSLSRTSTTTTGSPQTA) and 65–103 (SSSSSHHNHHNHNNPNTYYSPFTTPTQYHPATSSTPSST). The segment covering 81-93 (TYYSPFTTPTQYH) has biased composition (polar residues). Positions 94–103 (PATSSTPSST) are enriched in low complexity. Positions 134–529 (FDFSANAKWA…QPVVWASAWR (396 aa)) constitute a GRAS domain. Residues 141-206 (KWADSVLLEA…GSGERCYRTM (66 aa)) form a leucine repeat I (LRI) region. Positions 225–290 (VLKFQEVSPW…DDTPHLRLTT (66 aa)) are VHIID. A VHIID motif is present at residues 256–260 (IHIVD). Residues 310 to 343 (EIGNRMEKFARLMGVPFKFNIIHHVGDLSEFDLN) are leucine repeat II (LRII). The tract at residues 353-449 (LAINCVGAMH…ERAAGRAIVD (97 aa)) is PFYRE. The SAW stretch occupies residues 452–529 (ACEPSDSTER…QPVVWASAWR (78 aa)).

The protein belongs to the GRAS family. In terms of assembly, interacts with SCR, SCL23, JKD and MGP. Interacts with SIEL. Association to endosomes and intercellular movement of SHR rely on the interaction with SIEL. In terms of tissue distribution, expressed in the stele and the quiescent center. Not detected in the ground tissue cell lineage. The SHR protein moves from the stele to a single layer of adjacent cells, where it enters the nucleus.

Its subcellular location is the cytoplasm. The protein resides in the nucleus. The protein localises to the early endosome. It is found in the late endosome. It localises to the recycling endosome. In terms of biological role, transcription factor required for quiescent center cells specification and maintenance of surrounding stem cells, and for the asymmetric cell division involved in radial pattern formation in roots. Essential for both cell division and cell specification. Regulates the radial organization of the shoot axial organs and is required for normal shoot gravitropism. Directly controls the transcription of SCR, and when associated with SCR, of MGP, RLK, TRI, NUC and SCL3. The polypeptide is Protein SHORT-ROOT (Arabidopsis thaliana (Mouse-ear cress)).